Consider the following 300-residue polypeptide: F-box/LRR-repeat protein 15 (300 aa).

Met1 is subject to N-acetylmethionine. One can recognise an F-box domain in the interval 19-66 (LLDLPWEDVLLPHVLSRVPLRQLLWLQRVSRAFRALVQLHLARLRRFD). Positions 113–269 (NPQLRSVALA…EPSLSRLRKR (157 aa)) are interaction with SMURF1. LRR repeat units lie at residues 141-162 (RLQR…RGLA), 167-188 (ALEE…VYLA), 194-215 (GLRN…QELA), 220-241 (ELQH…RTLA), and 246-267 (ALRS…SRLR).

It belongs to the FBXL15 family. Part of the SCF (SKP1-CUL1-F-box) E3 ubiquitin-protein ligase complex SCF(FBXL15) composed of CUL1, SKP1, RBX1 and FBXL15.

Its subcellular location is the cytoplasm. The protein operates within protein modification; protein ubiquitination. Functionally, substrate recognition component of a SCF (SKP1-CUL1-F-box protein) E3 ubiquitin-protein ligase complex which mediates the ubiquitination and subsequent proteasomal degradation of SMURF1, thereby acting as a positive regulator of the BMP signaling pathway. Required for dorsal/ventral pattern formation and bone mass maintenance. Also mediates ubiquitination of SMURF2 and WWP2. The sequence is that of F-box/LRR-repeat protein 15 (FBXL15) from Bos taurus (Bovine).